The sequence spans 459 residues: Putative BTB/POZ domain-containing protein R541 (459 aa).

The region spanning 76–143 (NHITINVGGK…NQKSTNIELY (68 aa)) is the BTB domain.

It belongs to the mimivirus BTB/WD family.

The polypeptide is Putative BTB/POZ domain-containing protein R541 (Acanthamoeba polyphaga mimivirus (APMV)).